The chain runs to 81 residues: MQPIQIAIVALVVAIIIAIVVWSIVIIEYRKILRQRKIDRLIDRLIERAEDSGNESEGEISALVEMGVEMGHHAPWDVDDL.

Residues 1–6 (MQPIQI) are Extracellular-facing. Residues 7–27 (AIVALVVAIIIAIVVWSIVII) traverse the membrane as a helical segment. The Cytoplasmic segment spans residues 28–81 (EYRKILRQRKIDRLIDRLIERAEDSGNESEGEISALVEMGVEMGHHAPWDVDDL). Phosphoserine; by host CK2 occurs at positions 52 and 56.

Belongs to the HIV-1 VPU protein family. Homopentamer. Interacts with host CD4 and BRTC; these interactions induce proteasomal degradation of CD4. Interacts with host BST2; this interaction leads to the degradation of host BST2. Interacts with host FBXW11. Interacts with host AP1M1; this interaction plays a role in the mistrafficking and subsequent degradation of host BST2. Interacts with host RANBP2; this interaction allows Vpu to down-regulate host BLM sumoylation. In terms of processing, phosphorylated by host CK2. This phosphorylation is necessary for interaction with human BTRC and degradation of CD4.

The protein localises to the host membrane. Ion channel activity is inhibited by hexamethylene amiloride in vitro. Its function is as follows. Enhances virion budding by targeting host CD4 and Tetherin/BST2 to proteasome degradation. Degradation of CD4 prevents any unwanted premature interactions between viral Env and its host receptor CD4 in the endoplasmic reticulum. Degradation of antiretroviral protein Tetherin/BST2 is important for virion budding, as BST2 tethers new viral particles to the host cell membrane. Mechanistically, Vpu bridges either CD4 or BST2 to BTRC, a substrate recognition subunit of the Skp1/Cullin/F-box protein E3 ubiquitin ligase, induces their ubiquitination and subsequent proteasomal degradation. The alteration of the E3 ligase specificity by Vpu seems to promote the degradation of host IKBKB, leading to NF-kappa-B down-regulation and subsequent apoptosis. Acts as a viroporin that forms an oligomeric ion channel in membranes. Modulates the host DNA repair mechanisms to promote degradation of nuclear viral cDNA in cells that are already productively infected in order to suppress immune sensing and proviral hyper-integration (superinfection). Manipulates PML-NBs and modulates SUMOylation of host BLM protein thereby enhancing its DNA-end processing activity toward viral unintegrated linear DNA. Also inhibits RAD52-mediated homologous repair of viral cDNA, preventing the generation of dead-end circular forms of single copies of the long terminal repeat and permitting sustained nucleolytic attack. This Human immunodeficiency virus type 1 group M subtype B (isolate BH10) (HIV-1) protein is Protein Vpu.